The sequence spans 471 residues: 3-isopropylmalate dehydratase large subunit (471 aa).

Residues C347, C407, and C410 each contribute to the [4Fe-4S] cluster site.

This sequence belongs to the aconitase/IPM isomerase family. LeuC type 1 subfamily. Heterodimer of LeuC and LeuD. [4Fe-4S] cluster serves as cofactor.

The catalysed reaction is (2R,3S)-3-isopropylmalate = (2S)-2-isopropylmalate. It participates in amino-acid biosynthesis; L-leucine biosynthesis; L-leucine from 3-methyl-2-oxobutanoate: step 2/4. Functionally, catalyzes the isomerization between 2-isopropylmalate and 3-isopropylmalate, via the formation of 2-isopropylmaleate. This is 3-isopropylmalate dehydratase large subunit from Acaryochloris marina (strain MBIC 11017).